We begin with the raw amino-acid sequence, 285 residues long: MNTFQMRDKLKERLSHLDVDFKFNREEETLRIYRTDNNKGITIKLNAIVAKYEDKKEKIVDEIVYYVDEAIAQMADKTLESISSSQIMPVIRATSFDKKTKQGVPFIYDEHTAETAVYYAVDLGKSYRLIDESMLEDLKLTEQQIREMSLFNVRKLSNSYTTDEVKGNTFYFINSNDGYDASRILNTAFLNEIEAQCQGEMLVAVPHQDVLIIADIRNKTGYDVMAHLTMEFFTKGLVPITSLSFGYKQGHLEPIFILGKNNKQKRDPNVIQRLEANRRKFNKDK.

This sequence belongs to the UPF0354 family.

This Staphylococcus aureus (strain MW2) protein is UPF0354 protein MW1686.